The sequence spans 202 residues: Large ribosomal subunit protein bL25 (202 aa).

Positions 182-202 are disordered; sequence QTAPEEEEGTAAETTEPELAE. The span at 185 to 202 shows a compositional bias: acidic residues; the sequence is PEEEEGTAAETTEPELAE.

This sequence belongs to the bacterial ribosomal protein bL25 family. CTC subfamily. Part of the 50S ribosomal subunit; part of the 5S rRNA/L5/L18/L25 subcomplex. Contacts the 5S rRNA. Binds to the 5S rRNA independently of L5 and L18.

This is one of the proteins that binds to the 5S RNA in the ribosome where it forms part of the central protuberance. In Enterococcus faecalis (strain ATCC 700802 / V583), this protein is Large ribosomal subunit protein bL25.